A 156-amino-acid chain; its full sequence is Small ribosomal subunit protein uS7 (156 aa).

It belongs to the universal ribosomal protein uS7 family. Part of the 30S ribosomal subunit. Contacts proteins S9 and S11.

One of the primary rRNA binding proteins, it binds directly to 16S rRNA where it nucleates assembly of the head domain of the 30S subunit. Is located at the subunit interface close to the decoding center, probably blocks exit of the E-site tRNA. The protein is Small ribosomal subunit protein uS7 of Anoxybacillus flavithermus (strain DSM 21510 / WK1).